Here is a 209-residue protein sequence, read N- to C-terminus: V-type ATP synthase subunit D 2 (209 aa).

It belongs to the V-ATPase D subunit family.

Produces ATP from ADP in the presence of a proton gradient across the membrane. The chain is V-type ATP synthase subunit D 2 (atpD2) from Treponema pallidum (strain Nichols).